Reading from the N-terminus, the 630-residue chain is Beta-phellandrene synthase, chloroplastic (630 aa).

Residues 1 to 48 (MALVSSAPKSCLHKSLIRSTHHELKPLRRTIPTLGMCRRGKSFTPSVS) constitute a chloroplast transit peptide. Mg(2+) is bound by residues Asp-381, Asp-385, and Asp-533. The DDXXD motif motif lies at 381 to 385 (DDIYD).

The protein belongs to the terpene synthase family. Tpsd subfamily. Requires Mg(2+) as cofactor. Mn(2+) is required as a cofactor. The cofactor is K(+).

It is found in the plastid. The protein localises to the chloroplast. The enzyme catalyses (2E)-geranyl diphosphate = (-)-beta-phellandrene + diphosphate. Its pathway is terpene metabolism; oleoresin biosynthesis. Functionally, converts geranyl diphosphate to four products with (-)-(4S)-beta-phellandrene (52%) as the major olefin, and lesser amounts of (-)-(1S,5S)-beta-pinene (34%), (-)-1S,5S-alpha-pinene (8.5%), and (-)-(4S)-limonene (6%). Involved in defensive oleoresin formation in conifers in response to insect attack or other injury. Involved in monoterpene (C10) olefins biosynthesis. This chain is Beta-phellandrene synthase, chloroplastic (ag8), found in Abies grandis (Grand fir).